Consider the following 295-residue polypeptide: ATP synthase gamma chain (295 aa).

The protein belongs to the ATPase gamma chain family. In terms of assembly, F-type ATPases have 2 components, CF(1) - the catalytic core - and CF(0) - the membrane proton channel. CF(1) has five subunits: alpha(3), beta(3), gamma(1), delta(1), epsilon(1). CF(0) has three main subunits: a, b and c.

It is found in the cell membrane. In terms of biological role, produces ATP from ADP in the presence of a proton gradient across the membrane. The gamma chain is believed to be important in regulating ATPase activity and the flow of protons through the CF(0) complex. The protein is ATP synthase gamma chain of Herpetosiphon aurantiacus (strain ATCC 23779 / DSM 785 / 114-95).